The sequence spans 486 residues: Transcription factor VOZ1 (486 aa).

Positions P208–K405 are VOZ. C217, C222, C236, and H240 together coordinate Zn(2+). The segment at C217–H240 adopts a C3H1-type; atypical zinc-finger fold. The segment at E424–R445 is disordered. Positions N429–N438 are enriched in low complexity.

In terms of assembly, homodimer. Interacts with phytochrome B (phyB). In terms of tissue distribution, ubiquitous. Expressed in the vascular bundles of various tissues, specifically in the phloem.

The protein localises to the cytoplasm. It is found in the nucleus. Functionally, transcriptional activator acting positively in the phytochrome B signaling pathway. Functions redundantly with VOZ2 to promote flowering downstream of phytochrome B (phyB). Down-regulates 'FLOWERING LOCUS C' (FLC) and up-regulates 'FLOWERING LOCUS T' (FT). Binds to the 38-bp cis-acting region of the AVP1 gene. Interacts with phyB in the cytoplasm and is translocated to the nucleus at signal transmission, where it is subjected to degradation in a phytochrome-dependent manner. The polypeptide is Transcription factor VOZ1 (VOZ1) (Arabidopsis thaliana (Mouse-ear cress)).